The sequence spans 286 residues: D-tagatose-1,6-bisphosphate aldolase subunit KbaY (286 aa).

The active-site Proton donor is the Asp-82. Positions 83 and 180 each coordinate Zn(2+). Gly-181 lines the dihydroxyacetone phosphate pocket. His-208 provides a ligand contact to Zn(2+). Residues 209–211 and 230–233 each bind dihydroxyacetone phosphate; these read GAS and NVAT.

The protein belongs to the class II fructose-bisphosphate aldolase family. TagBP aldolase KbaY subfamily. As to quaternary structure, homotetramer. Forms a complex with KbaZ. The cofactor is Zn(2+).

It catalyses the reaction D-tagatofuranose 1,6-bisphosphate = D-glyceraldehyde 3-phosphate + dihydroxyacetone phosphate. It functions in the pathway carbohydrate metabolism; D-tagatose 6-phosphate degradation; D-glyceraldehyde 3-phosphate and glycerone phosphate from D-tagatose 6-phosphate: step 2/2. In terms of biological role, catalytic subunit of the tagatose-1,6-bisphosphate aldolase KbaYZ, which catalyzes the reversible aldol condensation of dihydroxyacetone phosphate (DHAP or glycerone-phosphate) with glyceraldehyde 3-phosphate (G3P) to produce tagatose 1,6-bisphosphate (TBP). Requires KbaZ subunit for full activity and stability. This is D-tagatose-1,6-bisphosphate aldolase subunit KbaY from Escherichia coli O45:K1 (strain S88 / ExPEC).